The following is a 142-amino-acid chain: Large ribosomal subunit protein uL11 (142 aa).

The protein belongs to the universal ribosomal protein uL11 family. In terms of assembly, part of the ribosomal stalk of the 50S ribosomal subunit. Interacts with L10 and the large rRNA to form the base of the stalk. L10 forms an elongated spine to which L12 dimers bind in a sequential fashion forming a multimeric L10(L12)X complex. One or more lysine residues are methylated.

Functionally, forms part of the ribosomal stalk which helps the ribosome interact with GTP-bound translation factors. The protein is Large ribosomal subunit protein uL11 of Haemophilus ducreyi (strain 35000HP / ATCC 700724).